A 302-amino-acid polypeptide reads, in one-letter code: GLABROUS1 enhancer-binding protein (302 aa).

Disordered stretches follow at residues 1–55 (MVTP…MKKK) and 158–229 (GQGD…NDDD). Residue S27 is modified to Phosphoserine. Basic and acidic residues predominate over residues 180 to 195 (RTNESGEEMLKEHEEE). The segment covering 208–217 (AKTTENGTSS) has biased composition (polar residues). The tract at residues 270 to 291 (LSDEWKALCVEETRFNIKKLRF) is non-canonical leucine-zipper.

This sequence belongs to the GeBP family. As to quaternary structure, homo- and heterodimers. Interacts with GPL1, GPL2 and GPL3. Interacts with KIN10, KIN11 and FLZ4. Interacts with KIN10 and KIN11 via its N-terminal part. Interacts with GPL1 and GPL3 via its C-terminal part. As to expression, expressed in the apical meristem and young leaf primordia. Not detected in emerging or mature leaves. Detected in the vascular tissues of cotyledons and leaves, in hydathodes and at the base of flowers and siliques, but not in roots.

It is found in the nucleus. The protein localises to the nucleolus. Functionally, DNA-binding protein, which specifically recognizes the GL1 enhancer sequence. May be involved in leaf initiation. May play redundant roles with GPL1 and GPL2 in cytokinin responses by regulating the transcript levels of type-A ARR response genes. Involved in stress responses. Plays a repressive role in cell expansion by counteracting the positive role of CPR5 in this process, but does not regulate cell proliferation or endoreduplication. May play a role in plant defense. The sequence is that of GLABROUS1 enhancer-binding protein from Arabidopsis thaliana (Mouse-ear cress).